The sequence spans 481 residues: UDP-N-acetylmuramate--L-alanine ligase (481 aa).

115 to 121 is a binding site for ATP; sequence GTHGKTT.

Belongs to the MurCDEF family.

The protein resides in the cytoplasm. It carries out the reaction UDP-N-acetyl-alpha-D-muramate + L-alanine + ATP = UDP-N-acetyl-alpha-D-muramoyl-L-alanine + ADP + phosphate + H(+). The protein operates within cell wall biogenesis; peptidoglycan biosynthesis. Functionally, cell wall formation. This Granulibacter bethesdensis (strain ATCC BAA-1260 / CGDNIH1) protein is UDP-N-acetylmuramate--L-alanine ligase.